The sequence spans 327 residues: Methionyl-tRNA formyltransferase (327 aa).

121–124 lines the (6S)-5,6,7,8-tetrahydrofolate pocket; that stretch reads SLLP.

This sequence belongs to the Fmt family.

It catalyses the reaction L-methionyl-tRNA(fMet) + (6R)-10-formyltetrahydrofolate = N-formyl-L-methionyl-tRNA(fMet) + (6S)-5,6,7,8-tetrahydrofolate + H(+). Its function is as follows. Attaches a formyl group to the free amino group of methionyl-tRNA(fMet). The formyl group appears to play a dual role in the initiator identity of N-formylmethionyl-tRNA by promoting its recognition by IF2 and preventing the misappropriation of this tRNA by the elongation apparatus. The sequence is that of Methionyl-tRNA formyltransferase from Burkholderia mallei (strain ATCC 23344).